Reading from the N-terminus, the 62-residue chain is Large ribosomal subunit protein bL28 (62 aa).

This sequence belongs to the bacterial ribosomal protein bL28 family.

In Helicobacter pylori (strain Shi470), this protein is Large ribosomal subunit protein bL28.